We begin with the raw amino-acid sequence, 605 residues long: Heparan-sulfate 6-O-sulfotransferase 2 (605 aa).

Residues 1–4 (MALP) are Cytoplasmic-facing. Positions 1–66 (MALPACAVRE…GVSHGFHTRP (66 aa)) are disordered. A helical; Signal-anchor for type II membrane protein transmembrane segment spans residues 5–27 (ACAVREFEPPRQPERGAPVRTTC). Residues 9–18 (REFEPPRQPE) are compositionally biased toward basic and acidic residues. Residues 28-605 (PRRHSRVEAE…DYIGSVEKWR (578 aa)) are Lumenal-facing. A glycan (N-linked (GlcNAc...) asparagine) is linked at N209. Residue 233-241 (HIQKTGGTT) coordinates 3'-phosphoadenylyl sulfate. Substrate is bound by residues 263–264 (KK), R280, W285, and H290. H290 serves as the catalytic Proton acceptor. Positions 325 and 333 each coordinate 3'-phosphoadenylyl sulfate. Positions 337 and 344 each coordinate substrate. A glycan (N-linked (GlcNAc...) asparagine) is linked at N404. 457–459 (TQY) is a 3'-phosphoadenylyl sulfate binding site. Residue N460 is glycosylated (N-linked (GlcNAc...) asparagine). 463-464 (RA) provides a ligand contact to 3'-phosphoadenylyl sulfate. Positions 530-605 (FQSQGQGQSQ…DYIGSVEKWR (76 aa)) are disordered. Low complexity predominate over residues 531 to 571 (QSQGQGQSQNPNQNQSQNPNPNANQNLTQNLMQNLTQSLSQ). N-linked (GlcNAc...) asparagine glycosylation is found at N544, N556, N564, N589, and N592. Positions 579–597 (KQNSGKEQNDNTSNGTNDY) are enriched in polar residues.

The protein belongs to the sulfotransferase 6 family.

The protein resides in the membrane. It carries out the reaction alpha-D-glucosaminyl-[heparan sulfate](n) + 3'-phosphoadenylyl sulfate = 6-sulfo-alpha-D-glucosaminyl-[heparan sulfate](n) + adenosine 3',5'-bisphosphate + H(+). Its function is as follows. 6-O-sulfation enzyme which catalyzes the transfer of sulfate from 3'-phosphoadenosine 5'-phosphosulfate (PAPS) to position 6 of the N-sulfoglucosamine residue (GlcNS) of heparan sulfate. The protein is Heparan-sulfate 6-O-sulfotransferase 2 of Homo sapiens (Human).